We begin with the raw amino-acid sequence, 358 residues long: Probable tartrate dehydrogenase/decarboxylase TtuC' (358 aa).

Positions 222, 246, and 250 each coordinate Mn(2+).

This sequence belongs to the isocitrate and isopropylmalate dehydrogenases family. Requires Mg(2+) as cofactor. Mn(2+) serves as cofactor. It depends on K(+) as a cofactor.

It is found in the cytoplasm. The catalysed reaction is tartrate + NAD(+) = 2-hydroxy-3-oxosuccinate + NADH + H(+). The enzyme catalyses (2R,3S)-tartrate + NAD(+) = 2-hydroxy-3-oxosuccinate + NADH + H(+). It catalyses the reaction (2R,3R)-tartrate + NAD(+) = 2-hydroxy-3-oxosuccinate + NADH + H(+). It carries out the reaction (2R,3R)-tartrate + H(+) = (R)-glycerate + CO2. The catalysed reaction is (R)-malate + NAD(+) = pyruvate + CO2 + NADH. The protein operates within carbohydrate acid metabolism; tartrate degradation; 2-hydroxy-3-oxosuccinate from L-tartrate: step 1/1. Its pathway is carbohydrate acid metabolism; tartrate degradation; 2-hydroxy-3-oxosuccinate from meso-tartrate: step 1/1. It participates in carbohydrate acid metabolism; tartrate degradation; D-glycerate from L-tartrate: step 1/1. Functionally, has multiple catalytic activities. Apart from catalyzing the oxidation of (+)-tartrate to oxaloglycolate, also converts meso-tartrate to D-glycerate and catalyzes the oxidative decarboxylation of D-malate to pyruvate. This Agrobacterium vitis (Rhizobium vitis) protein is Probable tartrate dehydrogenase/decarboxylase TtuC' (ttuC').